We begin with the raw amino-acid sequence, 305 residues long: MNFRRLKYFVKIVDIGSLTQAAEVLHIAQPALSQQVATLEGELNQQLLIRTKRGVTPTDAGKILYTHARAILRQCEQAQLAVHNVGQALSGQVSIGFAPGTAASSITMPLLQAVRAEFPEIVIYLHENSGAVLNEKLINHQLDMAVIYEHSPVAGVSSQALLKEDLFLVGTQDCPGQSVDVNAIAQMNLFLPSDYSAIRLRVDEAFSLRRLTAKVIGEIESIATLTAAIASGMGVAVLPESAARSLCGAVNGWMSRITTPSMSLSLSLNLPARANLSPQAQAVKELLMSVISSPVMEKRQWQLVS.

Residues 1–58 (MNFRRLKYFVKIVDIGSLTQAAEVLHIAQPALSQQVATLEGELNQQLLIRTKRGVTPT) form the HTH lysR-type domain. Residues 18–37 (LTQAAEVLHIAQPALSQQVA) constitute a DNA-binding region (H-T-H motif).

It belongs to the LysR transcriptional regulatory family.

Functionally, transcriptional activator for the hut, put and ure operons and repressor for the gdh and gltB operons in response to nitrogen limitation. Negative regulator of its own expression. This is Nitrogen assimilation regulatory protein nac (nac) from Escherichia coli (strain K12).